The sequence spans 418 residues: Light-independent protochlorophyllide reductase subunit N (418 aa).

Cys17, Cys42, and Cys103 together coordinate [4Fe-4S] cluster.

It belongs to the BchN/ChlN family. Protochlorophyllide reductase is composed of three subunits; ChlL, ChlN and ChlB. Forms a heterotetramer of two ChlB and two ChlN subunits. Requires [4Fe-4S] cluster as cofactor.

The enzyme catalyses chlorophyllide a + oxidized 2[4Fe-4S]-[ferredoxin] + 2 ADP + 2 phosphate = protochlorophyllide a + reduced 2[4Fe-4S]-[ferredoxin] + 2 ATP + 2 H2O. Its pathway is porphyrin-containing compound metabolism; chlorophyll biosynthesis (light-independent). Its function is as follows. Component of the dark-operative protochlorophyllide reductase (DPOR) that uses Mg-ATP and reduced ferredoxin to reduce ring D of protochlorophyllide (Pchlide) to form chlorophyllide a (Chlide). This reaction is light-independent. The NB-protein (ChlN-ChlB) is the catalytic component of the complex. The sequence is that of Light-independent protochlorophyllide reductase subunit N from Prochlorococcus marinus (strain MIT 9515).